Here is a 314-residue protein sequence, read N- to C-terminus: Probable cell division protein WhiA (314 aa).

The segment at residues 274 to 305 (SLAELGDRLEISKSGANHRMRKLKALEDMINA) is a DNA-binding region (H-T-H motif).

The protein belongs to the WhiA family.

Functionally, involved in cell division and chromosome segregation. The polypeptide is Probable cell division protein WhiA (Leuconostoc citreum (strain KM20)).